Consider the following 762-residue polypeptide: MSTFVNDTVEDAIKTPELDQPFEALGLKDDEYARIKEILGRRPTDAELTVYSVMWSEHCSYKSSKVHLRYFGETTTEEMASKILAGIGENAGVVDIGDGNAVTFRVESHNHPSFVEPHQGAATGVGGIVRDIMAMGARPIAVMDQLRFGALDNPDTQRVLPGVVDGISHYGNCLGLPNIGGETVFDDSYAGNPLVNALCVGTLKVEDLKLAFASGTGNKVILFGSRTGLDGIGGVSVLGSASFEEGEERKLPAVQVGDPFAEKVLIECCLELYKAGVVVGIQDLGGGGLACATSELAAAGDGGMRVNLDNVPLRAENMSAAEILASESQERMCAVVTPENVERFLEICAKWDVTCAEIGEVTDEKDRYVVVHNGEVVIDAPPSTIDEGPVYNRPVARPENQDELQLEGEIARPVDVEEIKAAWLKLVASPALASRAFITEQYDRYVRGNTVQAKNANAGVLRIDEETNRGVAISADASGRYTKLEPNTGAQLALAEAYRNVVSTGARPVAVTNCLNFGSPENAGVMWQFKEAVHGLADGSKLLGIPVSGGNVSFYNQTGDEPILPTPVVGVLGVLDNVEQSIGNVLPSEDNDLYLLGETFDEFGGSIWQQVSGAGLNGLPPVVDLLNEQRLADLFVGSDLFAASHDLSEGGLGQTLAELAIHADKGMDVDLSQIHPSLFTSLFAESASRIVVATNRGEELEKRAAELGVPVFKLGCTNDSAVIAVKGADVEFTVSVEELREAWTNTLPEAFGHAVGANAVVA.

H58 is an active-site residue. The ATP site is built by Y61 and R105. E107 contacts Mg(2+). Substrate contacts are provided by residues 108 to 111 (SHNH) and R130. Residue H109 is the Proton acceptor of the active site. A Mg(2+)-binding site is contributed by D131. Q255 is a substrate binding site. Residue D283 coordinates Mg(2+). Residue 327–329 (ESQ) participates in substrate binding. 2 residues coordinate ATP: N513 and G550. N551 is a binding site for Mg(2+). Residue S553 participates in substrate binding.

This sequence belongs to the FGAMS family. Monomer. Part of the FGAM synthase complex composed of 1 PurL, 1 PurQ and 2 PurS subunits.

It localises to the cytoplasm. It carries out the reaction N(2)-formyl-N(1)-(5-phospho-beta-D-ribosyl)glycinamide + L-glutamine + ATP + H2O = 2-formamido-N(1)-(5-O-phospho-beta-D-ribosyl)acetamidine + L-glutamate + ADP + phosphate + H(+). Its pathway is purine metabolism; IMP biosynthesis via de novo pathway; 5-amino-1-(5-phospho-D-ribosyl)imidazole from N(2)-formyl-N(1)-(5-phospho-D-ribosyl)glycinamide: step 1/2. Its function is as follows. Part of the phosphoribosylformylglycinamidine synthase complex involved in the purines biosynthetic pathway. Catalyzes the ATP-dependent conversion of formylglycinamide ribonucleotide (FGAR) and glutamine to yield formylglycinamidine ribonucleotide (FGAM) and glutamate. The FGAM synthase complex is composed of three subunits. PurQ produces an ammonia molecule by converting glutamine to glutamate. PurL transfers the ammonia molecule to FGAR to form FGAM in an ATP-dependent manner. PurS interacts with PurQ and PurL and is thought to assist in the transfer of the ammonia molecule from PurQ to PurL. The chain is Phosphoribosylformylglycinamidine synthase subunit PurL from Corynebacterium glutamicum (strain ATCC 13032 / DSM 20300 / JCM 1318 / BCRC 11384 / CCUG 27702 / LMG 3730 / NBRC 12168 / NCIMB 10025 / NRRL B-2784 / 534).